The following is a 485-amino-acid chain: Glycogen synthase (485 aa).

Lysine 21 lines the ADP-alpha-D-glucose pocket.

The protein belongs to the glycosyltransferase 1 family. Bacterial/plant glycogen synthase subfamily.

The enzyme catalyses [(1-&gt;4)-alpha-D-glucosyl](n) + ADP-alpha-D-glucose = [(1-&gt;4)-alpha-D-glucosyl](n+1) + ADP + H(+). Its pathway is glycan biosynthesis; glycogen biosynthesis. Synthesizes alpha-1,4-glucan chains using ADP-glucose. This is Glycogen synthase from Pseudomonas syringae pv. syringae (strain B728a).